The primary structure comprises 180 residues: Signal peptidase complex subunit 2 (180 aa).

Topologically, residues 1-45 (MTDEPVKVVNKWDGPTVKNALDEVVKKILNDKVGWTESHNLMNLR) are cytoplasmic. The chain crosses the membrane as a helical span at residues 46–66 (LLISFIGVAFSAFACGYDYYE). The Lumenal segment spans residues 67 to 72 (PFPKSK). A helical membrane pass occupies residues 73-93 (IVLAVCSVSYFICMGILQMYQ). Over 94 to 180 (WYVEKDCIYE…LYNRLIRSEQ (87 aa)) the chain is Cytoplasmic.

The protein belongs to the SPCS2 family. In terms of assembly, component of the signal peptidase complex (SPC) composed of a catalytic subunit sec-11 and three accessory subunits spcs-1, spcs-2 and spcs-3. The complex induces a local thinning of the ER membrane which is used to measure the length of the signal peptide (SP) h-region of protein substrates. This ensures the selectivity of the complex towards h-regions shorter than 18-20 amino acids.

It localises to the endoplasmic reticulum membrane. Functionally, component of the signal peptidase complex (SPC) which catalyzes the cleavage of N-terminal signal sequences from nascent proteins as they are translocated into the lumen of the endoplasmic reticulum. Enhances the enzymatic activity of SPC and facilitates the interactions between different components of the translocation site. This Caenorhabditis elegans protein is Signal peptidase complex subunit 2.